The following is a 320-amino-acid chain: Malate dehydrogenase (320 aa).

Residues 10–15 (GSGMIG) and Asp-34 each bind NAD(+). Residues Arg-83 and Arg-89 each contribute to the substrate site. NAD(+) contacts are provided by residues Asn-96 and 119–121 (ITN). Substrate is bound by residues Asn-121 and Arg-152. The active-site Proton acceptor is the His-176.

The protein belongs to the LDH/MDH superfamily. MDH type 3 family.

It catalyses the reaction (S)-malate + NAD(+) = oxaloacetate + NADH + H(+). Functionally, catalyzes the reversible oxidation of malate to oxaloacetate. In Agrobacterium fabrum (strain C58 / ATCC 33970) (Agrobacterium tumefaciens (strain C58)), this protein is Malate dehydrogenase.